We begin with the raw amino-acid sequence, 188 residues long: MSIKSDKWIRRMAQEHGMIEPFVERQVRGEGANRVISFGVSSYGYDVRCADEFKVFTNINSATVDPKNFDEKSFVDIKSDVCIIPPNSFALARTVEYFRIPRNVLTICLGKSTYARCGIIVNVTPLEPEWEGHVTLEFSNTTTLPAKIYANEGVAQMLFLESDEECEVSYKDRGGKYQGQRGVTLPRT.

DCTP contacts are provided by residues 111 to 116 (KSTYAR), 135 to 137 (TLE), glutamine 156, tyrosine 170, and glutamine 180. Glutamate 137 (proton donor/acceptor) is an active-site residue.

The protein belongs to the dCTP deaminase family. In terms of assembly, homotrimer.

It carries out the reaction dCTP + H2O + H(+) = dUTP + NH4(+). Its pathway is pyrimidine metabolism; dUMP biosynthesis; dUMP from dCTP (dUTP route): step 1/2. Its function is as follows. Catalyzes the deamination of dCTP to dUTP. The polypeptide is dCTP deaminase (Pseudomonas syringae pv. tomato (strain ATCC BAA-871 / DC3000)).